Here is a 160-residue protein sequence, read N- to C-terminus: Transcription elongation factor GreA (160 aa).

Residues alanine 50–serine 70 adopt a coiled-coil conformation.

It belongs to the GreA/GreB family.

Functionally, necessary for efficient RNA polymerase transcription elongation past template-encoded arresting sites. The arresting sites in DNA have the property of trapping a certain fraction of elongating RNA polymerases that pass through, resulting in locked ternary complexes. Cleavage of the nascent transcript by cleavage factors such as GreA or GreB allows the resumption of elongation from the new 3'terminus. GreA releases sequences of 2 to 3 nucleotides. This chain is Transcription elongation factor GreA, found in Legionella pneumophila (strain Corby).